A 328-amino-acid chain; its full sequence is Peroxidase 63 (328 aa).

The N-terminal stretch at 1-27 (MAEQSQLKNLTIILLLLCLSFQSLSFA) is a signal peptide. 4 disulfides stabilise this stretch: Cys41-Cys122, Cys74-Cys79, Cys128-Cys324, and Cys207-Cys234. Catalysis depends on His72, which acts as the Proton acceptor. Asp73, Gly78, Asp80, and Ser82 together coordinate Ca(2+). Position 170 (Pro170) interacts with substrate. His200 contacts heme b. Residue Thr201 participates in Ca(2+) binding. Residues Asn217 and Asn218 are each glycosylated (N-linked (GlcNAc...) asparagine). Ca(2+)-binding residues include Asp248, Thr251, and Asp256.

It belongs to the peroxidase family. Classical plant (class III) peroxidase subfamily. The cofactor is heme b. Ca(2+) is required as a cofactor.

It localises to the secreted. The catalysed reaction is 2 a phenolic donor + H2O2 = 2 a phenolic radical donor + 2 H2O. In terms of biological role, removal of H(2)O(2), oxidation of toxic reductants, biosynthesis and degradation of lignin, suberization, auxin catabolism, response to environmental stresses such as wounding, pathogen attack and oxidative stress. These functions might be dependent on each isozyme/isoform in each plant tissue. In Arabidopsis thaliana (Mouse-ear cress), this protein is Peroxidase 63 (PER63).